The sequence spans 181 residues: Kappa-casein (181 aa).

The N-terminal stretch at 1–21 is a signal peptide; that stretch reads MMRNFIVVVNILALTLPFLAA. Residue threonine 123 is modified to Phosphothreonine. O-linked (GalNAc...) threonine glycosylation is found at threonine 134, threonine 144, and threonine 155. Serine 162 bears the Phosphoserine; alternate mark. Serine 162 carries O-linked (GalNAc...) serine; alternate glycosylation. Serine 178 bears the Phosphoserine mark.

It belongs to the kappa-casein family. As to expression, mammary gland specific. Secreted in milk.

It localises to the secreted. Its function is as follows. Kappa-casein stabilizes micelle formation, preventing casein precipitation in milk. This is Kappa-casein (Csn3) from Mus musculus (Mouse).